We begin with the raw amino-acid sequence, 324 residues long: D-alanine--D-alanine ligase (324 aa).

One can recognise an ATP-grasp domain in the interval 116 to 311; the sequence is KQVWHTLGIP…FQQLVLAILA (196 aa). 142–197 contributes to the ATP binding site; sequence ATELGFPLIVKPAHEGSSIGMAKVSSASELIDAWKAASTYDSQVLVEQWIHGPEFT. Positions 265, 278, and 280 each coordinate Mg(2+).

The protein belongs to the D-alanine--D-alanine ligase family. Mg(2+) serves as cofactor. Requires Mn(2+) as cofactor.

It is found in the cytoplasm. It carries out the reaction 2 D-alanine + ATP = D-alanyl-D-alanine + ADP + phosphate + H(+). It functions in the pathway cell wall biogenesis; peptidoglycan biosynthesis. Its function is as follows. Cell wall formation. This Pseudomonas fluorescens (strain Pf0-1) protein is D-alanine--D-alanine ligase.